A 507-amino-acid polypeptide reads, in one-letter code: ATP synthase subunit alpha, chloroplastic (507 aa).

G170–T177 contributes to the ATP binding site.

Belongs to the ATPase alpha/beta chains family. F-type ATPases have 2 components, CF(1) - the catalytic core - and CF(0) - the membrane proton channel. CF(1) has five subunits: alpha(3), beta(3), gamma(1), delta(1), epsilon(1). CF(0) has four main subunits: a, b, b' and c.

The protein resides in the plastid. It is found in the chloroplast thylakoid membrane. The catalysed reaction is ATP + H2O + 4 H(+)(in) = ADP + phosphate + 5 H(+)(out). Its function is as follows. Produces ATP from ADP in the presence of a proton gradient across the membrane. The alpha chain is a regulatory subunit. This chain is ATP synthase subunit alpha, chloroplastic, found in Morus indica (Mulberry).